The chain runs to 993 residues: Glycine dehydrogenase (decarboxylating) (993 aa).

Lysine 715 carries the post-translational modification N6-(pyridoxal phosphate)lysine.

It belongs to the GcvP family. In terms of assembly, the glycine cleavage system is composed of four proteins: P, T, L and H. Pyridoxal 5'-phosphate is required as a cofactor.

It catalyses the reaction N(6)-[(R)-lipoyl]-L-lysyl-[glycine-cleavage complex H protein] + glycine + H(+) = N(6)-[(R)-S(8)-aminomethyldihydrolipoyl]-L-lysyl-[glycine-cleavage complex H protein] + CO2. Functionally, the glycine cleavage system catalyzes the degradation of glycine. The P protein binds the alpha-amino group of glycine through its pyridoxal phosphate cofactor; CO(2) is released and the remaining methylamine moiety is then transferred to the lipoamide cofactor of the H protein. This is Glycine dehydrogenase (decarboxylating) from Xylella fastidiosa (strain Temecula1 / ATCC 700964).